The following is a 218-amino-acid chain: Ras-related protein Rab-27B (218 aa).

Thr2 carries the N-acetylthreonine modification. 16–24 (GDSGVGKTT) serves as a coordination point for GTP. The short motif at 38–46 (FITTVGIDF) is the Effector region element. GTP-binding positions include 74–78 (DTAGQ), 133–136 (NKAD), and 163–165 (SAA). The cysteines at positions 123 and 188 are disulfide-linked. The tract at residues 193–218 (HIPDTVNGSSSGKLDGEKSAEKKCAC) is disordered. The segment covering 206–218 (LDGEKSAEKKCAC) has biased composition (basic and acidic residues). 2 S-geranylgeranyl cysteine lipidation sites follow: Cys216 and Cys218. Position 218 is a cysteine methyl ester (Cys218).

The protein belongs to the small GTPase superfamily. Rab family. Interacts with SYTL2, SYTL4, MYRIP and MLPH. Interacts with RPH3A and RPH3A. Interacts (GDP-bound form preferentially) with DENND10. Expressed at an extraordinary high level (0.1% of total protein) in urothelium.

The protein localises to the membrane. The protein resides in the late endosome. The enzyme catalyses GTP + H2O = GDP + phosphate + H(+). With respect to regulation, regulated by guanine nucleotide exchange factors (GEFs) which promote the exchange of bound GDP for free GTP, GTPase activating proteins (GAPs) which increase the GTP hydrolysis activity, and GDP dissociation inhibitors which inhibit the dissociation of the nucleotide from the GTPase. Activated by GEFs such as DENND10. Small GTPase which cycles between active GTP-bound and inactive GDP-bound states. In its active state, binds to a variety of effector proteins to regulate homeostasis of late endocytic pathway, including endosomal positioning, maturation and secretion. Plays a role in NTRK2/TRKB axonal anterograde transport by facilitating the association of NTRK2/TRKB with KLC1. May be involved in targeting uroplakins to urothelial apical membranes. The polypeptide is Ras-related protein Rab-27B (RAB27B) (Bos taurus (Bovine)).